The sequence spans 616 residues: Elongation factor 4 (616 aa).

The tr-type G domain maps to glutamate 17 to valine 203. GTP contacts are provided by residues aspartate 29 to threonine 34 and asparagine 150 to aspartate 153.

This sequence belongs to the TRAFAC class translation factor GTPase superfamily. Classic translation factor GTPase family. LepA subfamily.

Its subcellular location is the cell membrane. The enzyme catalyses GTP + H2O = GDP + phosphate + H(+). Required for accurate and efficient protein synthesis under certain stress conditions. May act as a fidelity factor of the translation reaction, by catalyzing a one-codon backward translocation of tRNAs on improperly translocated ribosomes. Back-translocation proceeds from a post-translocation (POST) complex to a pre-translocation (PRE) complex, thus giving elongation factor G a second chance to translocate the tRNAs correctly. Binds to ribosomes in a GTP-dependent manner. The protein is Elongation factor 4 of Corynebacterium jeikeium (strain K411).